We begin with the raw amino-acid sequence, 557 residues long: Hepatocyte nuclear factor 1-beta (557 aa).

The interval 1–31 (MVSKLTSLQQELLSALLSSGVTKEVLIQALE) is dimerization. The HNF-p1 domain maps to 1–32 (MVSKLTSLQQELLSALLSSGVTKEVLIQALEE). 4 positions are modified to phosphoserine: S49, S52, S75, and S80. The interval 66-85 (TNGHAKGRLSGDEGSEDGDD) is disordered. One can recognise a POU-specific atypical domain in the interval 93-188 (KELQALNTEE…ILRQFNQTVQ (96 aa)). The segment at residues 231–311 (MRRNRFKWGP…NRRKEEAFRQ (81 aa)) is a DNA-binding region (homeobox; HNF1-type). Residues 324–370 (HNLNPLLTHGSPHHQPSSSPPNKLSGVRYSQPGNNEVTSSSTISHHG) are disordered. The span at 354–370 (QPGNNEVTSSSTISHHG) shows a compositional bias: polar residues.

It belongs to the HNF1 homeobox family. As to quaternary structure, binds DNA as a dimer. Can form homodimer or heterodimer with HNF1-alpha. Interacts (via HNF-p1 domain) with PCBD1; the interaction increases its transactivation activity. In terms of tissue distribution, liver, kidney and intestine.

It is found in the nucleus. In terms of biological role, transcription factor that binds to the inverted palindrome 5'-GTTAATNATTAAC-3'. Binds to the FPC element in the cAMP regulatory unit of the PLAU gene. Transcriptional activity is increased by coactivator PCBD1. The chain is Hepatocyte nuclear factor 1-beta (Hnf1b) from Rattus norvegicus (Rat).